We begin with the raw amino-acid sequence, 161 residues long: Regulator of ribonuclease activity A (161 aa).

Belongs to the RraA family. Homotrimer. Binds to both RNA-binding sites in the C-terminal region of Rne and to RhlB.

It localises to the cytoplasm. Functionally, globally modulates RNA abundance by binding to RNase E (Rne) and regulating its endonucleolytic activity. Can modulate Rne action in a substrate-dependent manner by altering the composition of the degradosome. Modulates RNA-binding and helicase activities of the degradosome. The polypeptide is Regulator of ribonuclease activity A (Enterobacter sp. (strain 638)).